The primary structure comprises 254 residues: UPF0246 protein CPR_2119 (254 aa).

This sequence belongs to the UPF0246 family.

This Clostridium perfringens (strain SM101 / Type A) protein is UPF0246 protein CPR_2119.